Consider the following 364-residue polypeptide: Dihydroorotate dehydrogenase (quinone) (364 aa).

FMN is bound by residues 61–65 (AGYDK) and Thr85. Lys65 is a substrate binding site. Position 110-114 (110-114 (NRLGF)) interacts with substrate. Residues Asn139 and Asn170 each contribute to the FMN site. A substrate-binding site is contributed by Asn170. Residue Ser173 is the Nucleophile of the active site. A substrate-binding site is contributed by Asn175. Positions 215 and 243 each coordinate FMN. 244–245 (NT) lines the substrate pocket. FMN is bound by residues Gly266, Gly295, and 316 to 317 (YT).

The protein belongs to the dihydroorotate dehydrogenase family. Type 2 subfamily. Monomer. FMN is required as a cofactor.

The protein resides in the cell membrane. It carries out the reaction (S)-dihydroorotate + a quinone = orotate + a quinol. Its pathway is pyrimidine metabolism; UMP biosynthesis via de novo pathway; orotate from (S)-dihydroorotate (quinone route): step 1/1. In terms of biological role, catalyzes the conversion of dihydroorotate to orotate with quinone as electron acceptor. This is Dihydroorotate dehydrogenase (quinone) from Brucella anthropi (strain ATCC 49188 / DSM 6882 / CCUG 24695 / JCM 21032 / LMG 3331 / NBRC 15819 / NCTC 12168 / Alc 37) (Ochrobactrum anthropi).